A 162-amino-acid polypeptide reads, in one-letter code: NADH-quinone oxidoreductase subunit I 2 (162 aa).

2 4Fe-4S ferredoxin-type domains span residues 53-83 (LRRY…IDSE) and 93-122 (TRYD…ETRI). [4Fe-4S] cluster-binding residues include cysteine 63, cysteine 66, cysteine 69, cysteine 73, cysteine 102, cysteine 105, cysteine 108, and cysteine 112.

This sequence belongs to the complex I 23 kDa subunit family. NDH-1 is composed of 14 different subunits. Subunits NuoA, H, J, K, L, M, N constitute the membrane sector of the complex. [4Fe-4S] cluster serves as cofactor.

It localises to the cell inner membrane. The catalysed reaction is a quinone + NADH + 5 H(+)(in) = a quinol + NAD(+) + 4 H(+)(out). NDH-1 shuttles electrons from NADH, via FMN and iron-sulfur (Fe-S) centers, to quinones in the respiratory chain. The immediate electron acceptor for the enzyme in this species is believed to be ubiquinone. Couples the redox reaction to proton translocation (for every two electrons transferred, four hydrogen ions are translocated across the cytoplasmic membrane), and thus conserves the redox energy in a proton gradient. The chain is NADH-quinone oxidoreductase subunit I 2 from Nitrosococcus oceani (strain ATCC 19707 / BCRC 17464 / JCM 30415 / NCIMB 11848 / C-107).